Consider the following 256-residue polypeptide: (R)-S-adenosyl-L-methionine hydrolase (256 aa).

Adenosine contacts are provided by Asp-7, His-41, Asp-68, and Asn-183. (R)-S-adenosyl-L-methionine is bound by residues Asn-183, Tyr-212, Ser-226, Glu-231, Val-234, and Met-236. Position 234 (Val-234) interacts with adenosine.

The protein belongs to the SAM hydrolase / SAM-dependent halogenase family. In terms of assembly, homotrimer.

The catalysed reaction is (R)-S-adenosyl-L-methionine + H2O = adenosine + L-methionine + H(+). Functionally, catalyzes the hydrolysis of S-adenosyl-L-methionine (SAM) into adenosine and L-methionine. Is likely stereoselective, specifically hydrolyzing (R)-S-adenosyl-L-methionine ((R)-SAM), the inactive form of the ubiquitous cofactor SAM, and not the active form of SAM, (S)-S-adenosyl-L-methionine. Probaly plays a role in preventing accumulation of (R)-S-adenosyl-L-methionine in cells; maintenance of (S)-S-denosyl-L-methionine homochirality is important for cellular health given that the (R)-form is largely inactive as a methyl donor and can function as an inhibitor of methyltransferases. Is unable to mediate a fluorination or chlorination reaction with SAM. The protein is (R)-S-adenosyl-L-methionine hydrolase of Pyrococcus horikoshii (strain ATCC 700860 / DSM 12428 / JCM 9974 / NBRC 100139 / OT-3).